We begin with the raw amino-acid sequence, 154 residues long: MSIRIELAESMEVLSLRVVGPYYEKIPQGFDEILSWAREHHLSIDKSLAFYWDDPSKVEADELRADVAITCKEMPSTLPEDVGIRREVIPGGLYAVTHTIVENGDFAKAWDDFYKAINAQGYCPAGDICYESYLCDGSNGKWDIEIWQSVEAAN.

Belongs to the DNA gyrase inhibitor family. Interacts with DNA gyrase.

Its subcellular location is the cytoplasm. Its function is as follows. Inhibits the supercoiling activity of DNA gyrase. Acts by inhibiting DNA gyrase at an early step, prior to (or at the step of) binding of DNA by the gyrase. It protects cells against toxins that target DNA gyrase, by inhibiting activity of these toxins and reducing the formation of lethal double-strand breaks in the cell. The polypeptide is DNA gyrase inhibitor (Pectobacterium carotovorum subsp. carotovorum (strain PC1)).